We begin with the raw amino-acid sequence, 335 residues long: Glyceraldehyde-3-phosphate dehydrogenase (335 aa).

NAD(+)-binding positions include 15–16 and aspartate 37; that span reads RI. D-glyceraldehyde 3-phosphate-binding positions include 155 to 157, threonine 186, arginine 201, 214 to 215, and arginine 237; these read SCT and TG. The active-site Nucleophile is cysteine 156. Residues glutamine 301 and asparagine 318 each contribute to the NAD(+) site.

Belongs to the glyceraldehyde-3-phosphate dehydrogenase family. As to quaternary structure, homotetramer.

The protein resides in the cytoplasm. The enzyme catalyses D-glyceraldehyde 3-phosphate + phosphate + NADP(+) = (2R)-3-phospho-glyceroyl phosphate + NADPH + H(+). It catalyses the reaction D-glyceraldehyde 3-phosphate + phosphate + NAD(+) = (2R)-3-phospho-glyceroyl phosphate + NADH + H(+). It functions in the pathway carbohydrate degradation; glycolysis; pyruvate from D-glyceraldehyde 3-phosphate: step 1/5. In Haloarcula vallismortis (Halobacterium vallismortis), this protein is Glyceraldehyde-3-phosphate dehydrogenase (gap).